A 565-amino-acid chain; its full sequence is Membrane protein insertase YidC (565 aa).

Helical transmembrane passes span 6–26 (VLLI…WGKN), 348–368 (LMAL…SLLH), 370–390 (WGWA…PLSA), 437–457 (GGCF…WVLV), 479–499 (PYFI…KLTP), and 516–536 (PLIF…YWVI).

It belongs to the OXA1/ALB3/YidC family. Type 1 subfamily. As to quaternary structure, interacts with the Sec translocase complex via SecD. Specifically interacts with transmembrane segments of nascent integral membrane proteins during membrane integration.

Its subcellular location is the cell inner membrane. Its function is as follows. Required for the insertion and/or proper folding and/or complex formation of integral membrane proteins into the membrane. Involved in integration of membrane proteins that insert both dependently and independently of the Sec translocase complex, as well as at least some lipoproteins. Aids folding of multispanning membrane proteins. The polypeptide is Membrane protein insertase YidC (Xylella fastidiosa (strain 9a5c)).